We begin with the raw amino-acid sequence, 267 residues long: Indole-3-glycerol phosphate synthase (267 aa).

The protein belongs to the TrpC family.

It carries out the reaction 1-(2-carboxyphenylamino)-1-deoxy-D-ribulose 5-phosphate + H(+) = (1S,2R)-1-C-(indol-3-yl)glycerol 3-phosphate + CO2 + H2O. It participates in amino-acid biosynthesis; L-tryptophan biosynthesis; L-tryptophan from chorismate: step 4/5. The protein is Indole-3-glycerol phosphate synthase of Polynucleobacter asymbioticus (strain DSM 18221 / CIP 109841 / QLW-P1DMWA-1) (Polynucleobacter necessarius subsp. asymbioticus).